The chain runs to 275 residues: Ribosomal RNA small subunit methyltransferase A (275 aa).

Residues Asn19, Leu21, Gly46, Glu71, Asp94, and Asn117 each coordinate S-adenosyl-L-methionine.

It belongs to the class I-like SAM-binding methyltransferase superfamily. rRNA adenine N(6)-methyltransferase family. RsmA subfamily.

The protein localises to the cytoplasm. It catalyses the reaction adenosine(1518)/adenosine(1519) in 16S rRNA + 4 S-adenosyl-L-methionine = N(6)-dimethyladenosine(1518)/N(6)-dimethyladenosine(1519) in 16S rRNA + 4 S-adenosyl-L-homocysteine + 4 H(+). In terms of biological role, specifically dimethylates two adjacent adenosines (A1518 and A1519) in the loop of a conserved hairpin near the 3'-end of 16S rRNA in the 30S particle. May play a critical role in biogenesis of 30S subunits. This Burkholderia thailandensis (strain ATCC 700388 / DSM 13276 / CCUG 48851 / CIP 106301 / E264) protein is Ribosomal RNA small subunit methyltransferase A.